Reading from the N-terminus, the 521-residue chain is Proactivator polypeptide-like 1 (521 aa).

A signal peptide spans 1–17; the sequence is MLCALLLLPSLLGATRA. Residues 18–59 constitute a propeptide that is removed on maturation; it reads SPTSGPQECAKGSTVWCQDLQTAARCGAVGYCQGAVWNKPTA. The Saposin A-type 1 domain occupies 19 to 59; the sequence is PTSGPQECAKGSTVWCQDLQTAARCGAVGYCQGAVWNKPTA. 2 consecutive Saposin B-type domains span residues 60 to 144 and 180 to 258; these read KSLP…EPLQ and EGAL…EELG. Disulfide bonds link Cys64/Cys140, Cys67/Cys134, and Cys95/Cys107. A propeptide spanning residues 146–180 is cleaved from the precursor; the sequence is HLATLRPLSKEDTFEAVAPFMANGPLTFHPRQAPE. 3 cysteine pairs are disulfide-bonded: Cys184/Cys254, Cys187/Cys248, and Cys213/Cys224. A glycan (N-linked (GlcNAc...) asparagine) is linked at Asn201. Positions 259 to 288 are excised as a propeptide; that stretch reads APARLTQVVAMDGVPSLELGLPRKQSEMQM. Saposin B-type domains follow at residues 290-370 and 392-473; these read AGVT…GNRR and QGSF…HGPR. 3 disulfide bridges follow: Cys294-Cys366, Cys297-Cys360, and Cys325-Cys336. Residue Asn311 is glycosylated (N-linked (GlcNAc...) asparagine). Positions 370 to 391 are excised as a propeptide; it reads RRARAVHDAYAIVPSPEWDAEN. 3 cysteine pairs are disulfide-bonded: Cys396/Cys469, Cys399/Cys463, and Cys427/Cys438. Residues 474-521 constitute a propeptide that is removed on maturation; that stretch reads TPLLGTDQCALGPSFWCRSQEAAKLCNAVQHCQKHVWKEMHLHAGEHA. Positions 475–515 constitute a Saposin A-type 2 domain; sequence PLLGTDQCALGPSFWCRSQEAAKLCNAVQHCQKHVWKEMHL.

Its subcellular location is the secreted. May activate the lysosomal degradation of sphingolipids. This Homo sapiens (Human) protein is Proactivator polypeptide-like 1 (PSAPL1).